The following is a 190-amino-acid chain: E3 ubiquitin-protein ligase RNF183 (190 aa).

Residues 1-159 (MSEPQGQELR…RECVRNPHFR (159 aa)) lie on the Cytoplasmic side of the membrane. Residues 13–60 (CPVCWNPFNNTFHTPKVLDCCHSFCVECLAHLSLVTPARRRLLCPLCR) form an RING-type zinc finger. The helical; Anchor for type IV membrane protein transmembrane segment at 160 to 180 (IFAYLMAVILSVTLLLIFSIF) threads the bilayer. Residues 181 to 190 (WTKQFFWGMG) are Lumenal-facing.

Interacts with FATE1. Interacts with SEC16A. Interacts with BCL2L1. Autoubiquitinated (in vitro). As to expression, highly expressed in the kidney and testis.

It localises to the endoplasmic reticulum membrane. The protein resides in the endoplasmic reticulum. The protein localises to the golgi apparatus. It is found in the cis-Golgi network membrane. Its subcellular location is the lysosome membrane. It catalyses the reaction S-ubiquitinyl-[E2 ubiquitin-conjugating enzyme]-L-cysteine + [acceptor protein]-L-lysine = [E2 ubiquitin-conjugating enzyme]-L-cysteine + N(6)-ubiquitinyl-[acceptor protein]-L-lysine.. The protein operates within protein modification; protein ubiquitination. In terms of biological role, acts as an E3 ubiquitin ligase catalyzing the covalent attachment of ubiquitin moieties onto substrate proteins. Triggers apoptosis in response to prolonged ER stress by mediating the polyubiquitination and subsequent proteasomal degradation of BCL2L1. May collaborate with FATE1 to restrain BIK protein levels thus regulating apoptotic signaling. This Mus musculus (Mouse) protein is E3 ubiquitin-protein ligase RNF183 (Rnf183).